Consider the following 120-residue polypeptide: Ribonuclease P protein component (120 aa).

The protein belongs to the RnpA family. In terms of assembly, consists of a catalytic RNA component (M1 or rnpB) and a protein subunit.

It carries out the reaction Endonucleolytic cleavage of RNA, removing 5'-extranucleotides from tRNA precursor.. In terms of biological role, RNaseP catalyzes the removal of the 5'-leader sequence from pre-tRNA to produce the mature 5'-terminus. It can also cleave other RNA substrates such as 4.5S RNA. The protein component plays an auxiliary but essential role in vivo by binding to the 5'-leader sequence and broadening the substrate specificity of the ribozyme. In Mycobacterium leprae (strain Br4923), this protein is Ribonuclease P protein component.